Here is a 533-residue protein sequence, read N- to C-terminus: CTP synthase (533 aa).

Residues 1 to 264 are amidoligase domain; that stretch reads MKYIFVTGGV…GKLVTEKLNL (264 aa). Residue S12 coordinates CTP. S12 is a binding site for UTP. ATP-binding positions include 13 to 18 and D70; that span reads SLGKGI. Mg(2+) contacts are provided by D70 and E138. CTP is bound by residues 145-147, 185-190, and K221; these read DIE and KTKPTQ. Residues 185 to 190 and K221 each bind UTP; that span reads KTKPTQ. 237 to 239 provides a ligand contact to ATP; sequence KDA. Residues 289–533 form the Glutamine amidotransferase type-1 domain; it reads TIGIVGKYIE…HGLVKASIEK (245 aa). An L-glutamine-binding site is contributed by G357. The active-site Nucleophile; for glutamine hydrolysis is C384. L-glutamine-binding positions include 385 to 388, E407, and R464; that span reads LGMQ. Catalysis depends on residues H509 and E511.

It belongs to the CTP synthase family. As to quaternary structure, homotetramer.

It carries out the reaction UTP + L-glutamine + ATP + H2O = CTP + L-glutamate + ADP + phosphate + 2 H(+). The enzyme catalyses L-glutamine + H2O = L-glutamate + NH4(+). It catalyses the reaction UTP + NH4(+) + ATP = CTP + ADP + phosphate + 2 H(+). The protein operates within pyrimidine metabolism; CTP biosynthesis via de novo pathway; CTP from UDP: step 2/2. With respect to regulation, allosterically activated by GTP, when glutamine is the substrate; GTP has no effect on the reaction when ammonia is the substrate. The allosteric effector GTP functions by stabilizing the protein conformation that binds the tetrahedral intermediate(s) formed during glutamine hydrolysis. Inhibited by the product CTP, via allosteric rather than competitive inhibition. Its function is as follows. Catalyzes the ATP-dependent amination of UTP to CTP with either L-glutamine or ammonia as the source of nitrogen. Regulates intracellular CTP levels through interactions with the four ribonucleotide triphosphates. The polypeptide is CTP synthase (Methanococcus maripaludis (strain DSM 14266 / JCM 13030 / NBRC 101832 / S2 / LL)).